We begin with the raw amino-acid sequence, 80 residues long: uncharacterized protein (80 aa).

A disordered region spans residues 57–80 (GNIDSDVSDQDQIGNPSAPISNQI).

This is an uncharacterized protein from Bacillus subtilis (strain 168).